We begin with the raw amino-acid sequence, 493 residues long: Kelch-like protein 42 (493 aa).

The region spanning 5–77 (EMVQIRLEDR…INAGGAREGW (73 aa)) is the BTB domain. 6 Kelch repeats span residues 183-241 (VLVA…ILDN), 242-289 (YLFI…AVNS), 291-332 (LYAI…ECKG), 334-379 (IYVI…SVEE), 381-436 (IYIV…ALHN), and 438-487 (GIYI…SLYL).

As to quaternary structure, component of the BCR(KLHL42) E3 ubiquitin ligase complex, at least composed of CUL3 and KLHL42. Interacts (via the BTB domain) with CUL3. Interacts (via the kelch domains) with KATNA1.

It is found in the cytoplasm. The protein resides in the cytoskeleton. Its subcellular location is the spindle. It participates in protein modification; protein ubiquitination. Substrate-specific adapter of a BCR (BTB-CUL3-RBX1) E3 ubiquitin-protein ligase complex required for mitotic progression and cytokinesis. The BCR(KLHL42) E3 ubiquitin ligase complex mediates the ubiquitination and subsequent degradation of KATNA1. Involved in microtubule dynamics throughout mitosis. This Mus musculus (Mouse) protein is Kelch-like protein 42 (Klhl42).